A 571-amino-acid chain; its full sequence is Adenine deaminase (571 aa).

The protein belongs to the metallo-dependent hydrolases superfamily. Adenine deaminase family. Requires Mn(2+) as cofactor.

The catalysed reaction is adenine + H2O + H(+) = hypoxanthine + NH4(+). The protein is Adenine deaminase of Dehalococcoides mccartyi (strain ATCC BAA-2100 / JCM 16839 / KCTC 5957 / BAV1).